We begin with the raw amino-acid sequence, 230 residues long: Potassium/proton antiporter CemA (230 aa).

The next 4 helical transmembrane spans lie at 7–27 (LPSFLYLVFIVLLPWGVSFSF), 106–126 (IILHFSTNIICLAILSGSFFL), 145–165 (LNDSIKAFFILLVTDFFVGFH), and 181–201 (LGWAPNELIFTIFVCSFPVIL).

This sequence belongs to the CemA family.

Its subcellular location is the plastid. The protein localises to the chloroplast inner membrane. The catalysed reaction is K(+)(in) + H(+)(out) = K(+)(out) + H(+)(in). In terms of biological role, contributes to K(+)/H(+) antiport activity by supporting proton efflux to control proton extrusion and homeostasis in chloroplasts in a light-dependent manner to modulate photosynthesis. Prevents excessive induction of non-photochemical quenching (NPQ) under continuous-light conditions. Indirectly promotes efficient inorganic carbon uptake into chloroplasts. The chain is Potassium/proton antiporter CemA from Zea mays (Maize).